Consider the following 510-residue polypeptide: Cytochrome P450 93A3 (510 aa).

The helical transmembrane segment at 64 to 84 (PIIHLFLGSVPCVVASTAEAA) threads the bilayer. Residue C448 coordinates heme.

Belongs to the cytochrome P450 family. The cofactor is heme.

It is found in the membrane. This Glycine max (Soybean) protein is Cytochrome P450 93A3 (CYP93A3).